The following is a 304-amino-acid chain: Ribosomal RNA small subunit methyltransferase H (304 aa).

Residues 47 to 49 (GGH), Asp66, Phe93, Asp108, and Gln115 contribute to the S-adenosyl-L-methionine site.

It belongs to the methyltransferase superfamily. RsmH family.

The protein resides in the cytoplasm. It carries out the reaction cytidine(1402) in 16S rRNA + S-adenosyl-L-methionine = N(4)-methylcytidine(1402) in 16S rRNA + S-adenosyl-L-homocysteine + H(+). Functionally, specifically methylates the N4 position of cytidine in position 1402 (C1402) of 16S rRNA. In Prochlorococcus marinus (strain NATL1A), this protein is Ribosomal RNA small subunit methyltransferase H.